A 275-amino-acid chain; its full sequence is tRNA pseudouridine synthase B (275 aa).

D38 serves as the catalytic Nucleophile.

The protein belongs to the pseudouridine synthase TruB family. Type 1 subfamily.

The catalysed reaction is uridine(55) in tRNA = pseudouridine(55) in tRNA. Functionally, responsible for synthesis of pseudouridine from uracil-55 in the psi GC loop of transfer RNAs. This is tRNA pseudouridine synthase B from Nitratiruptor sp. (strain SB155-2).